The following is a 155-amino-acid chain: uncharacterized protein (155 aa).

Positions 1-21 are cleaved as a signal peptide; it reads MFFIVAAGFVIAALIAAIGMA. The segment at 35–155 is disordered; it reads GQTKPATTRP…PVYRPPEEMV (121 aa). The span at 118–128 shows a compositional bias: polar residues; the sequence is ATASNTPQNEA.

This is an uncharacterized protein from Schizosaccharomyces pombe (strain 972 / ATCC 24843) (Fission yeast).